Reading from the N-terminus, the 658-residue chain is Probable replication factor A 73 kDa subunit (658 aa).

Disordered stretches follow at residues 134–155 and 169–222; these read PEVK…RPNI and SEFQ…TERG. A DNA-binding region (OB) is located at residues 236–326; the sequence is FRIHGMVSRK…TLRNDSVVEA (91 aa). The C4-type zinc-finger motif lies at 518–539; it reads CASEGCQKKVIESDGEYRCEKC.

Belongs to the replication factor A protein 1 family. As to quaternary structure, component of the heterotrimeric canonical replication protein A complex (RPA).

The protein localises to the nucleus. Functionally, as part of the heterotrimeric replication protein A complex (RPA/RP-A), binds and stabilizes single-stranded DNA intermediates, that form during DNA replication or upon DNA stress. It prevents their reannealing and in parallel, recruits and activates different proteins and complexes involved in DNA metabolism. Thereby, it plays an essential role both in DNA replication and the cellular response to DNA damage. This is Probable replication factor A 73 kDa subunit from Caenorhabditis briggsae.